Reading from the N-terminus, the 201-residue chain is Putative amino-acid transporter Mb0498 (201 aa).

5 helical membrane passes run 25–45 (VLVIVALCGIADGALIAAGVG), 57–77 (MTLVARFGGAAFLIGYALLAA), 104–124 (LVVTFLNPHVYLDTVVLIGAL), 133–153 (WFFGAGAWAASVVWFAVLGFS), and 169–189 (ILDALVAVTMIGVAVVVLVTS).

This sequence belongs to the LysE/ArgO transporter (TC 2.A.75) family.

It localises to the cell membrane. The sequence is that of Putative amino-acid transporter Mb0498 from Mycobacterium bovis (strain ATCC BAA-935 / AF2122/97).